The following is a 218-amino-acid chain: uncharacterized protein (218 aa).

Composition is skewed to polar residues over residues 1–21 (MSSQQQESEASGYNTSASSEF) and 68–102 (LNTSNDSNLVRNTARSPDSSMNGRPQTRRSTSSDI). 3 disordered regions span residues 1–39 (MSSQQQESEASGYNTSASSEFGSLEDSHQFVSPVTRHAS), 63–116 (EKRL…STSG), and 170–205 (GAKRKMATPSQSLKRQEKQSPLESRHGGLRSRGTPQ). Positions 183–195 (KRQEKQSPLESRH) are enriched in basic and acidic residues.

This is an uncharacterized protein from Caenorhabditis elegans.